The chain runs to 740 residues: Leucine-rich repeat neuronal protein 4 (740 aa).

An N-terminal signal peptide occupies residues 1–18 (MRQTLPLLLLTVLRPSWA). Residues 19 to 679 (DPPQEKVPLF…PCAAFTTKPS (661 aa)) lie on the Extracellular side of the membrane. A glycan (N-linked (GlcNAc...) asparagine) is linked at Asn42. LRR repeat units follow at residues 51 to 74 (LPAADATALTLANRNLERLPGCLP), 75 to 97 (RTLRSLDASHNLLRALSTSELGH), 98 to 123 (LEQLQVLTLRHNRIAALRWGPGGPAG), 125 to 144 (HTLDLSYNQLAALPPCTGPA), 145 to 168 (LSSLRALALAGNPLRALQPRAFAC), 174 to 197 (LLNLSCTALGRGAQGGIAEAAFAG), 203 to 226 (LVTLEVLDLSGTFLERVESGWIRD), 228 to 251 (PKLTSLYLRKMPRLTTLEGDIFKM), 253 to 276 (PNLQQLDCQDSPALASVATHIFQD), and 277 to 300 (TPHLQVLLFQNCNLSSFPPWTLDS). Asn176 carries N-linked (GlcNAc...) asparagine glycosylation. N-linked (GlcNAc...) asparagine glycans are attached at residues Asn289, Asn379, and Asn442. The segment at 389 to 517 (VAPSAAPATR…QAPNPSLSEG (129 aa)) is disordered. 2 stretches are compositionally biased toward polar residues: residues 430–454 (APSTTNSVAGHSNSSVFPRAASTTR) and 490–514 (WDRSISSPQPGQRTHATPQAPNPSL). Residues 579-679 (IPDPPRLQGV…PCAAFTTKPS (101 aa)) form the Fibronectin type-III domain. N-linked (GlcNAc...) asparagine glycosylation occurs at Asn622. Residues 680–700 (FALLLSGLCAASGLLLASTVV) traverse the membrane as a helical segment. The Cytoplasmic segment spans residues 701-740 (LSACLCRRGQTLGLQRCDTHLVAYKNPAFDDYPLGLQTVS).

Its subcellular location is the membrane. Its function is as follows. May play an important role in hippocampus-dependent long-lasting memory. This Homo sapiens (Human) protein is Leucine-rich repeat neuronal protein 4 (LRRN4).